Here is an 87-residue protein sequence, read N- to C-terminus: Large ribosomal subunit protein bL27 (87 aa).

Residues Met-1–Lys-24 form a disordered region.

The protein belongs to the bacterial ribosomal protein bL27 family.

The sequence is that of Large ribosomal subunit protein bL27 from Rickettsia massiliae (strain Mtu5).